The sequence spans 462 residues: L-seryl-tRNA(Sec) selenium transferase (462 aa).

Lysine 293 is modified (N6-(pyridoxal phosphate)lysine).

This sequence belongs to the SelA family. Pyridoxal 5'-phosphate is required as a cofactor.

The protein resides in the cytoplasm. The enzyme catalyses L-seryl-tRNA(Sec) + selenophosphate + H(+) = L-selenocysteinyl-tRNA(Sec) + phosphate. The protein operates within aminoacyl-tRNA biosynthesis; selenocysteinyl-tRNA(Sec) biosynthesis; selenocysteinyl-tRNA(Sec) from L-seryl-tRNA(Sec) (bacterial route): step 1/1. In terms of biological role, converts seryl-tRNA(Sec) to selenocysteinyl-tRNA(Sec) required for selenoprotein biosynthesis. This is L-seryl-tRNA(Sec) selenium transferase from Clostridium botulinum (strain Langeland / NCTC 10281 / Type F).